Reading from the N-terminus, the 247-residue chain is Dof zinc finger protein DOF3.5 (247 aa).

The Dof-type zinc finger occupies 25 to 79 (PSCPRCGSSNTKFCYYNNYSLTQPRYFCKGCRRYWTKGGSLRNVPVGGGCRKSRR). Zn(2+)-binding residues include C27, C30, C52, and C55. Residues 70 to 100 (VGGGCRKSRRPKSSSGNNTKTSLTANSGNPG) form a disordered region. The span at 82–94 (SSSGNNTKTSLTA) shows a compositional bias: polar residues.

The protein localises to the nucleus. Transcription factor that binds specifically to a 5'-AA[AG]G-3' consensus core sequence. This Arabidopsis thaliana (Mouse-ear cress) protein is Dof zinc finger protein DOF3.5 (DOF3.5).